We begin with the raw amino-acid sequence, 42 residues long: Photosystem II reaction center protein J (42 aa).

The chain crosses the membrane as a helical span at residues 12–32 (LWFVGMIVGLAALGLLGIFFY).

The protein belongs to the PsbJ family. In terms of assembly, PSII is composed of 1 copy each of membrane proteins PsbA, PsbB, PsbC, PsbD, PsbE, PsbF, PsbH, PsbI, PsbJ, PsbK, PsbL, PsbM, PsbT, PsbX, PsbY, PsbZ, Psb30/Ycf12, at least 3 peripheral proteins of the oxygen-evolving complex and a large number of cofactors. It forms dimeric complexes.

Its subcellular location is the plastid. The protein localises to the chloroplast thylakoid membrane. Its function is as follows. One of the components of the core complex of photosystem II (PSII). PSII is a light-driven water:plastoquinone oxidoreductase that uses light energy to abstract electrons from H(2)O, generating O(2) and a proton gradient subsequently used for ATP formation. It consists of a core antenna complex that captures photons, and an electron transfer chain that converts photonic excitation into a charge separation. The polypeptide is Photosystem II reaction center protein J (Nephroselmis olivacea (Green alga)).